We begin with the raw amino-acid sequence, 87 residues long: Small ribosomal subunit protein bS20 (87 aa).

The interval Met1–Ser26 is disordered.

The protein belongs to the bacterial ribosomal protein bS20 family.

In terms of biological role, binds directly to 16S ribosomal RNA. The protein is Small ribosomal subunit protein bS20 of Salmonella gallinarum (strain 287/91 / NCTC 13346).